Reading from the N-terminus, the 601-residue chain is HMG domain-containing protein 4 (601 aa).

A Glycyl lysine isopeptide (Lys-Gly) (interchain with G-Cter in SUMO2) cross-link involves residue Lys-8. Disordered stretches follow at residues 51 to 410 and 473 to 514; these read VRNS…KKKN and TTVK…ASPA. The segment covering 82–93 has biased composition (low complexity); that stretch reads DYYYGDISSLES. Position 102 is a phosphoserine (Ser-102). A Glycyl lysine isopeptide (Lys-Gly) (interchain with G-Cter in SUMO2) cross-link involves residue Lys-191. A Phosphoserine modification is found at Ser-197. 2 stretches are compositionally biased toward polar residues: residues 212–221 and 270–282; these read QYPSQQATVK and DASQFAESHSANL. The segment covering 316–344 has biased composition (basic residues); that stretch reads IKKKKKSKKSKKKKDKEKHKEKRHSKSKR. The span at 394–404 shows a compositional bias: basic and acidic residues; it reads EEKDKERERGE. Residues 407-475 constitute a DNA-binding region (HMG box); the sequence is KKKNMSAYQV…KQNKAEATTV (69 aa). Ser-497, Ser-502, and Ser-512 each carry phosphoserine.

It is found in the nucleus. In terms of biological role, negatively regulates Wnt/beta-catenin signaling during development. In Homo sapiens (Human), this protein is HMG domain-containing protein 4 (HMGXB4).